The following is a 299-amino-acid chain: MAELGLNEHHQNEVINYMRFARSKRGLRLKTVDSCFQDLKESRLVEETFTVDEVSEVLNGLQAVVHSEVESELINTAYTNVLLLRQLFSQAEKWYLKLQTDISELENRELLEQVAEFEKAEFTSSNKKSIIDSMKPKLAPLHEGGAAELLNKEIIRLQEENEKLKSRLKTIESQATDALDEKSKLERALQDLQLEHGSQKDFIKAQDLSDLENTVAALKSEFQKTLNDQTENQKSLEENLATAKHDLLRVQEQLSMAEKELEKKFQQTAAFRNMKEILTKKNDQIKDLRKRLAKYEPED.

Residues 96-296 adopt a coiled-coil conformation; that stretch reads LKLQTDISEL…DLRKRLAKYE (201 aa). The interaction with BSS9 stretch occupies residues 145 to 299; sequence GAAELLNKEI…KRLAKYEPED (155 aa).

It belongs to the LZTFL1 family. As to quaternary structure, self-associates. Interacts with BBS9; the interaction mediates the association of LZTL1 with the BBsome complex and regulates BBSome ciliary trafficking.

The protein resides in the cytoplasm. Functionally, regulates ciliary localization of the BBSome complex. Together with the BBSome complex, controls SMO ciliary trafficking and contributes to the sonic hedgehog (SHH) pathway regulation. May play a role in neurite outgrowth. May have tumor suppressor function. The sequence is that of Leucine zipper transcription factor-like protein 1 (LZTFL1) from Bos taurus (Bovine).